We begin with the raw amino-acid sequence, 451 residues long: MNKMKNFKRRLSLSVPRPETIEESLAEFTEQFNQLHTQTNEDGTDEPEQLSPGMQYQQRQNQRRFSMEDLNKRLSLPMDIRLPQEFLQKLQLENPGLPKPLTRMSRRASLSDIGFGKLETYVKLDKLGEGTYATVFKGRSKLTENLVALKEIRLEHEEGAPCTAIREVSLLKDLKHANIVTLHDLIHTDRSLTLVFEYLDSDLKQYLDHCGNLMNMHNVKIFMFQLLRGLAYCHHRKILHRDLKPQNLLINERGELKLADFGLARAKSVPTKTYSNEVVTLWYRPPDVLLGSTEYSTPIDMWGVGCILYEMATGKPLFPGSTVKEELHLIFRLLGTPTEESWPGVTSISEFRAYNFPRYLPQPLLSHAPRLDTEGINLLSSLLLYESKSRMSAEAALNHPYFQSLGDRVHQLHDTASIFSLKEIQLQKDPGYRGLAFQHPGRGKSRRQSIF.

5 positions are modified to phosphoserine: Ser-12, Ser-51, Ser-66, Ser-75, and Ser-109. The region spanning 121 to 402 (YVKLDKLGEG…AEAALNHPYF (282 aa)) is the Protein kinase domain. Residues 127-135 (LGEGTYATV) and Lys-150 contribute to the ATP site. Asp-242 (proton acceptor) is an active-site residue. Phosphoserine is present on residues Ser-417 and Ser-420.

It belongs to the protein kinase superfamily. CMGC Ser/Thr protein kinase family. CDC2/CDKX subfamily. As to expression, in brain, kidney, intestine and at a much lower level, in fetal tissues.

The enzyme catalyses L-seryl-[protein] + ATP = O-phospho-L-seryl-[protein] + ADP + H(+). It catalyses the reaction L-threonyl-[protein] + ATP = O-phospho-L-threonyl-[protein] + ADP + H(+). In terms of biological role, may play a role in signal transduction cascades in terminally differentiated cells. The protein is Cyclin-dependent kinase 18 (Cdk18) of Mus musculus (Mouse).